Here is a 1030-residue protein sequence, read N- to C-terminus: Importin beta-like SAD2 homolog (1030 aa).

An N-acetylmethionine modification is found at Met1. An Importin N-terminal domain is found at 25 to 99; sequence AEQSLNQLQH…RNQILVFVSQ (75 aa). Disordered regions lie at residues 886–928 and 940–964; these read AAKA…GSTL and SYSDDDDFSDDDFSDDEELESPIDE. Acidic residues-rich tracts occupy residues 890–924 and 943–964; these read EEEEEDEDGDDDDMDEFQTDDEDEDGDDENPDETD and DDDDFSDDDFSDDEELESPIDE.

The protein belongs to the importin beta family.

Its subcellular location is the cytoplasm. The protein resides in the nucleus. Functionally, functions probably in nuclear protein import, either by acting as autonomous nuclear transport receptor or as an adapter-like protein in association with other importin subunits. The sequence is that of Importin beta-like SAD2 homolog from Arabidopsis thaliana (Mouse-ear cress).